Reading from the N-terminus, the 354-residue chain is Polyribonucleotide 5'-hydroxyl-kinase PF0112 (354 aa).

Position 36–43 (36–43 (GDVDTGKT)) interacts with ATP.

Requires a divalent metal cation as cofactor.

It carries out the reaction a 5'-end dephospho-2'-deoxyribonucleoside-DNA + ATP = a 5'-end 5'-phospho-2'-deoxyribonucleoside-DNA + ADP + H(+). It catalyses the reaction a 5'-end dephospho-ribonucleoside-RNA + ATP = a 5'-end 5'-phospho-ribonucleoside-RNA + ADP + H(+). Polynucleotide kinase that can phosphorylate the 5'-hydroxyl groups of both single-stranded RNA (ssRNA) and single-stranded DNA (ssDNA). Exhibits a strong preference for ssRNA. This is Polyribonucleotide 5'-hydroxyl-kinase PF0112 from Pyrococcus furiosus (strain ATCC 43587 / DSM 3638 / JCM 8422 / Vc1).